Here is a 241-residue protein sequence, read N- to C-terminus: Phosphoribosylaminoimidazole-succinocarboxamide synthase (241 aa).

This sequence belongs to the SAICAR synthetase family.

The catalysed reaction is 5-amino-1-(5-phospho-D-ribosyl)imidazole-4-carboxylate + L-aspartate + ATP = (2S)-2-[5-amino-1-(5-phospho-beta-D-ribosyl)imidazole-4-carboxamido]succinate + ADP + phosphate + 2 H(+). It participates in purine metabolism; IMP biosynthesis via de novo pathway; 5-amino-1-(5-phospho-D-ribosyl)imidazole-4-carboxamide from 5-amino-1-(5-phospho-D-ribosyl)imidazole-4-carboxylate: step 1/2. The sequence is that of Phosphoribosylaminoimidazole-succinocarboxamide synthase from Lacticaseibacillus paracasei (strain ATCC 334 / BCRC 17002 / CCUG 31169 / CIP 107868 / KCTC 3260 / NRRL B-441) (Lactobacillus paracasei).